The following is a 201-amino-acid chain: Large ribosomal subunit protein uL4 (201 aa).

The disordered stretch occupies residues Gly42–Arg67.

This sequence belongs to the universal ribosomal protein uL4 family. Part of the 50S ribosomal subunit.

One of the primary rRNA binding proteins, this protein initially binds near the 5'-end of the 23S rRNA. It is important during the early stages of 50S assembly. It makes multiple contacts with different domains of the 23S rRNA in the assembled 50S subunit and ribosome. In terms of biological role, forms part of the polypeptide exit tunnel. The polypeptide is Large ribosomal subunit protein uL4 (Legionella pneumophila (strain Paris)).